The chain runs to 161 residues: PHD finger-containing protein 4 (161 aa).

Residues 30-80 form a PHD-type zinc finger; the sequence is KKPCEVCGSNANDHAIMTCFLCRDTREHIYCARVHLRSVPRMWICEECRMN. C33, C36, C48, C51, H57, C60, C74, and C77 together coordinate Zn(2+). Over residues 114–132 the composition is skewed to polar residues; it reads TMTSSDSGNQISATHQQPP. Positions 114-161 are disordered; it reads TMTSSDSGNQISATHQQPPQAHASPVAVPMDTSSSDNQQPPSDSESAI. Positions 146-161 are enriched in low complexity; that stretch reads SSSDNQQPPSDSESAI.

As to quaternary structure, interacts directly with AIPP3/BDT1.

In terms of biological role, together with AIPP3/BDT1, cooperates to form a BAH-PHD bivalent histone reader complex able to read histone H3 lysine 27 trimethylation (H3K27me3) histone marks in order to regulate transcription, especially to prevent early flowering; promotes AIPP3/BDT1 binding to H3K27me3. The chain is PHD finger-containing protein 4 from Arabidopsis thaliana (Mouse-ear cress).